A 79-amino-acid chain; its full sequence is UPF0337 protein YhjA (79 aa).

The tract at residues 1–30 is disordered; the sequence is MALNDKLDATKDKVSGKVKETTGKVTGDEK.

It belongs to the UPF0337 (CsbD) family.

This is UPF0337 protein YhjA (yhjA) from Lactococcus lactis subsp. lactis (strain IL1403) (Streptococcus lactis).